The primary structure comprises 320 residues: Transaldolase (320 aa).

Lys-126 acts as the Schiff-base intermediate with substrate in catalysis.

It belongs to the transaldolase family. Type 1 subfamily. As to quaternary structure, homodimer.

It localises to the cytoplasm. It catalyses the reaction D-sedoheptulose 7-phosphate + D-glyceraldehyde 3-phosphate = D-erythrose 4-phosphate + beta-D-fructose 6-phosphate. Its pathway is carbohydrate degradation; pentose phosphate pathway; D-glyceraldehyde 3-phosphate and beta-D-fructose 6-phosphate from D-ribose 5-phosphate and D-xylulose 5-phosphate (non-oxidative stage): step 2/3. Transaldolase is important for the balance of metabolites in the pentose-phosphate pathway. This Bordetella bronchiseptica (strain ATCC BAA-588 / NCTC 13252 / RB50) (Alcaligenes bronchisepticus) protein is Transaldolase.